The chain runs to 236 residues: Histone H1 (236 aa).

The segment covering 1–10 (MPPKKTETKA) has biased composition (basic and acidic residues). Disordered stretches follow at residues 1-36 (MPPK…SPST) and 94-236 (KGVF…AEKA). Residues 11–36 (ADASAAAAPAPAAAPTSAPKTKSPST) are compositionally biased toward low complexity. Residues 36–111 (THASYLDMIT…GPSGGTKLAK (76 aa)) enclose the H15 domain. The span at 109–122 (LAKKVAKPAPKKAA) shows a compositional bias: basic residues. The span at 123-150 (PKKETKEKKPAAAKKEGAAKKETKEKKA) shows a compositional bias: basic and acidic residues. A compositionally biased stretch (low complexity) spans 153–162 (AKKAAAPKKA). Basic and acidic residues predominate over residues 165–174 (PKKEVKEKKA). Over residues 202-220 (AKSTAKPAAAKKAAAPKKA) the composition is skewed to low complexity. A compositionally biased stretch (basic and acidic residues) spans 224 to 236 (KKAEKAEPAAEKA).

This sequence belongs to the histone H1/H5 family.

It localises to the nucleus. The protein resides in the chromosome. Functionally, could act as an H1-type linker histone. This chain is Histone H1 (hH1), found in Neurospora crassa (strain ATCC 24698 / 74-OR23-1A / CBS 708.71 / DSM 1257 / FGSC 987).